An 88-amino-acid chain; its full sequence is Small ribosomal subunit protein uS15 (88 aa).

This sequence belongs to the universal ribosomal protein uS15 family. As to quaternary structure, part of the 30S ribosomal subunit. Forms a bridge to the 50S subunit in the 70S ribosome, contacting the 23S rRNA.

One of the primary rRNA binding proteins, it binds directly to 16S rRNA where it helps nucleate assembly of the platform of the 30S subunit by binding and bridging several RNA helices of the 16S rRNA. Functionally, forms an intersubunit bridge (bridge B4) with the 23S rRNA of the 50S subunit in the ribosome. The protein is Small ribosomal subunit protein uS15 of Mycoplasma mycoides subsp. mycoides SC (strain CCUG 32753 / NCTC 10114 / PG1).